A 109-amino-acid polypeptide reads, in one-letter code: Fluorescence recovery protein (109 aa).

In terms of assembly, probably a dimer, interacts with the C-terminal domain of OCP-R.

It is found in the cellular thylakoid membrane. Functionally, destabilizes orange carotenoid protein-R form (OCP-R), the FRP-OCP interaction accelerates the OCP-R to OCP-O conversion. Increases fluorescence recovery following non-photochemical quenching (NPQ) by OCP, most probably by destabilizing OCP-R binding to the phycobilisome core. The chain is Fluorescence recovery protein (frp) from Synechocystis sp. (strain ATCC 27184 / PCC 6803 / Kazusa).